We begin with the raw amino-acid sequence, 214 residues long: Ribonuclease HII (214 aa).

The region spanning 26 to 214 is the RNase H type-2 domain; that stretch reads EIVCGVDEAG…PVREAFDLIR (189 aa). The a divalent metal cation site is built by Asp32, Glu33, and Asp124.

Belongs to the RNase HII family. Requires Mn(2+) as cofactor. It depends on Mg(2+) as a cofactor.

It is found in the cytoplasm. It carries out the reaction Endonucleolytic cleavage to 5'-phosphomonoester.. Endonuclease that specifically degrades the RNA of RNA-DNA hybrids. The polypeptide is Ribonuclease HII (Burkholderia pseudomallei (strain 1710b)).